A 644-amino-acid chain; its full sequence is Protein cueball (644 aa).

The first 26 residues, 1-26 (MIRIRFGMDVLLVLLLATCLLTPAHG), serve as a signal peptide directing secretion. Topologically, residues 27 to 531 (TPLEWDFAVT…VCLTPRVWTS (505 aa)) are extracellular. N-linked (GlcNAc...) asparagine glycans are attached at residues Asn-82 and Asn-108. 3 LDL-receptor class B repeats span residues 121–166 (MNLF…DVCR), 167–211 (RKLY…DQLS), and 212–257 (DRLF…TNDA). Residues Asn-175 and Asn-190 are each glycosylated (N-linked (GlcNAc...) asparagine). The segment at 280–301 (TTTSKPEEEDSTDSTDFTDPEP) is disordered. Acidic residues predominate over residues 286 to 301 (EEEDSTDSTDFTDPEP). N-linked (GlcNAc...) asparagine glycosylation occurs at Asn-313. EGF-like domains follow at residues 398 to 430 (EIRECHNYCVHGTCQMSELAYPKCYCQPGFTGE) and 433 to 471 (ELSVCSGLCLNGGHCRVSKDENEAPSCECPAKFGGARCE). Cystine bridges form between Cys-402–Cys-411, Cys-406–Cys-421, Cys-437–Cys-447, Cys-441–Cys-459, and Cys-461–Cys-470. N-linked (GlcNAc...) asparagine glycans are attached at residues Asn-473 and Asn-508. Residues 532 to 552 (SVIIILVVGIVSSLLLVAVIV) form a helical membrane-spanning segment. The Cytoplasmic segment spans residues 553 to 644 (HGIRRLYKPK…LIHNMEDDLY (92 aa)).

Belongs to the cueball family.

It localises to the cell membrane. Its function is as follows. Has a role in spermatogenesis and oogenesis. This is Protein cueball from Drosophila sechellia (Fruit fly).